The sequence spans 330 residues: DNA-directed RNA polymerase subunit alpha (330 aa).

The tract at residues 1 to 231 is alpha N-terminal domain (alpha-NTD); that stretch reads MQTNLLKPKT…EQLAVFAQLE (231 aa). The interval 250–330 is alpha C-terminal domain (alpha-CTD); sequence FDPILLRPVD…SWPPAGLDKR (81 aa).

The protein belongs to the RNA polymerase alpha chain family. In terms of assembly, homodimer. The RNAP catalytic core consists of 2 alpha, 1 beta, 1 beta' and 1 omega subunit. When a sigma factor is associated with the core the holoenzyme is formed, which can initiate transcription.

It catalyses the reaction RNA(n) + a ribonucleoside 5'-triphosphate = RNA(n+1) + diphosphate. In terms of biological role, DNA-dependent RNA polymerase catalyzes the transcription of DNA into RNA using the four ribonucleoside triphosphates as substrates. This is DNA-directed RNA polymerase subunit alpha from Polaromonas naphthalenivorans (strain CJ2).